The following is a 316-amino-acid chain: MSKTDFSHDLLRFSDEVKEALHSGKPVVALESTVIAHGLPYPENVATARKIEAAVRAEGAIPATIGIENGRFLIGMSDADLERFGSTRGIPKASSRDIPVILAQGGMGATTVASSLVAADLAGIPFFASAGIGGVHRGAERSMDISADLIQFTRSRVAVVCAGAKSILDLGLTLEYLETQCVPIISYQSDDFPAFYCRSSGFHSPHRLDDATVIARSIDMHWKLGNQSSVLITHPIHEEDAIGTDEVESIIREAAVQAEHEGIRGPGATPYLMRAVAKATEGKTVKANMSVLISTAALAGKLACAHIDYLRQQNQA.

The active-site Proton donor is the E31. K92 and V112 together coordinate substrate. D144 is a Mn(2+) binding site. Substrate is bound at residue 146–148 (SAD). The Nucleophile role is filled by K165.

This sequence belongs to the pseudouridine-5'-phosphate glycosidase family. In terms of assembly, homotrimer. It depends on Mn(2+) as a cofactor.

The enzyme catalyses D-ribose 5-phosphate + uracil = psi-UMP + H2O. Functionally, catalyzes the reversible cleavage of pseudouridine 5'-phosphate (PsiMP) to ribose 5-phosphate and uracil. Functions biologically in the cleavage direction, as part of a pseudouridine degradation pathway. Part of an operon that could be involved in the biosynthesis of the blue pigment indigoidine, which is implicated in pathogenicity and protection from oxidative stress. This Dickeya dadantii (strain 3937) (Erwinia chrysanthemi (strain 3937)) protein is Pseudouridine-5'-phosphate glycosidase.